We begin with the raw amino-acid sequence, 488 residues long: UDP-N-acetylmuramate--L-alanine ligase (488 aa).

Residue 129–135 (GSHGKTT) coordinates ATP.

This sequence belongs to the MurCDEF family.

It localises to the cytoplasm. It carries out the reaction UDP-N-acetyl-alpha-D-muramate + L-alanine + ATP = UDP-N-acetyl-alpha-D-muramoyl-L-alanine + ADP + phosphate + H(+). It functions in the pathway cell wall biogenesis; peptidoglycan biosynthesis. Cell wall formation. The polypeptide is UDP-N-acetylmuramate--L-alanine ligase (Prochlorococcus marinus (strain MIT 9313)).